The sequence spans 315 residues: Secreted frizzled-related protein 5 (315 aa).

A signal peptide spans 1 to 27; sequence MRAAAGGARAAVLALLLGALHGAPARG. The 118-residue stretch at 46-163 folds into the FZ domain; it reads SKPPQCLDIP…PLDNDLCIAV (118 aa). Intrachain disulfides connect C51–C114, C61–C107, C98–C133, C122–C160, C126–C150, C179–C251, C182–C253, and C196–C301. In terms of domain architecture, NTR spans 179-301; that stretch reads CAQCEMEHSA…AVKFMFSYPC (123 aa).

Belongs to the secreted frizzled-related protein (sFRP) family. In terms of tissue distribution, strongly expressed in the retinal pigment epithelium (RPE). Weak expression in retina, brain, heart, liver, kidney, testis and muscle.

The protein localises to the secreted. Its function is as follows. Soluble frizzled-related proteins (sFRPS) function as modulators of Wnt signaling through direct interaction with Wnts. They have a role in regulating cell growth and differentiation in specific cell types. SFRP5 may be involved in determining the polarity of photoreceptor, and perhaps other, cells in the retina. Inhibits Wnt8 signaling, in vitro. This is Secreted frizzled-related protein 5 (SFRP5) from Bos taurus (Bovine).